Consider the following 117-residue polypeptide: UPF0102 protein Clos_1471 (117 aa).

It belongs to the UPF0102 family.

In Alkaliphilus oremlandii (strain OhILAs) (Clostridium oremlandii (strain OhILAs)), this protein is UPF0102 protein Clos_1471.